The following is a 455-amino-acid chain: ATP-dependent protease ATPase subunit HslU (455 aa).

Residues Val23, Gly65–Glu70, Asp266, Glu333, and Arg405 each bind ATP.

This sequence belongs to the ClpX chaperone family. HslU subfamily. A double ring-shaped homohexamer of HslV is capped on each side by a ring-shaped HslU homohexamer. The assembly of the HslU/HslV complex is dependent on binding of ATP.

It is found in the cytoplasm. Functionally, ATPase subunit of a proteasome-like degradation complex; this subunit has chaperone activity. The binding of ATP and its subsequent hydrolysis by HslU are essential for unfolding of protein substrates subsequently hydrolyzed by HslV. HslU recognizes the N-terminal part of its protein substrates and unfolds these before they are guided to HslV for hydrolysis. The chain is ATP-dependent protease ATPase subunit HslU from Xanthomonas campestris pv. campestris (strain 8004).